The primary structure comprises 534 residues: EH domain-containing protein 1 (534 aa).

Position 1 is an N-acetylmethionine (Met-1). Residues 55-286 (FDNKPMVLLV…DLFKDIQSLP (232 aa)) form the Dynamin-type G domain. The segment at 65–72 (GQYSTGKT) is G1 motif. An ATP-binding site is contributed by 65–72 (GQYSTGKT). Residues 91–92 (EP) are G2 motif. The segment at 153–156 (DTPG) is G3 motif. The stretch at 198-227 (DEFSEVIKALKNHEDKIRVVLNKADQIETQ) forms a coiled coil. The G4 motif stretch occupies residues 219-222 (NKAD). Lys-220 serves as a coordination point for ATP. Position 243 (Ile-243) is a region of interest, G5 motif. Trp-258 is an ATP binding site. Phosphoserine is present on residues Ser-355 and Ser-456. The 89-residue stretch at 444-532 (DKPTYDEIFY…PHLIPPSKRR (89 aa)) folds into the EH domain. The EF-hand domain maps to 476–511 (LPNTVLGKIWKLADVDKDGLLDDEEFALANHLIKVK). Asp-489, Asp-491, Asp-493, and Glu-500 together coordinate Ca(2+).

The protein belongs to the TRAFAC class dynamin-like GTPase superfamily. Dynamin/Fzo/YdjA family. EHD subfamily. Homooligomer, and heterooligomer with EHD2, EHD3 and EHD4, ATP-binding is required for heterooligomerization. Interacts (via EH domain) with MICALL1 (via NPF1 motif); the interaction is direct and recruits EHD1 to membranes. Interacts with RAB35; the interaction is indirect through MICALL1 and recruits EHD1 to membranes. Interacts (via EH domain) with PACSIN2 (via NPF motifs); regulates localization to tubular recycling endosome membranes. Interacts with PACSIN1. Interacts with RAB8A. Interacts with FER1L5 (via second C2 domain). Interacts with MYOF. Interacts with ZFYVE20. Interacts (via EH domain) with RAB11FIP2.

It localises to the recycling endosome membrane. Its subcellular location is the early endosome membrane. The protein resides in the cell membrane. The protein localises to the cell projection. It is found in the cilium membrane. ATP- and membrane-binding protein that controls membrane reorganization/tubulation upon ATP hydrolysis. In vitro causes vesiculation of endocytic membranes. Acts in early endocytic membrane fusion and membrane trafficking of recycling endosomes. Recruited to endosomal membranes upon nerve growth factor stimulation, indirectly regulates neurite outgrowth. Plays a role in myoblast fusion. Involved in the unidirectional retrograde dendritic transport of endocytosed BACE1 and in efficient sorting of BACE1 to axons implicating a function in neuronal APP processing. Plays a role in the formation of the ciliary vesicle (CV), an early step in cilium biogenesis. Proposed to be required for the fusion of distal appendage vesicles (DAVs) to form the CV by recruiting SNARE complex component SNAP29. Is required for recruitment of transition zone proteins CEP290, RPGRIP1L, TMEM67 and B9D2, and of IFT20 following DAV reorganization before Rab8-dependent ciliary membrane extension. Required for the loss of CCP110 form the mother centriole essential for the maturation of the basal body during ciliogenesis. The protein is EH domain-containing protein 1 of Rattus norvegicus (Rat).